The sequence spans 211 residues: Ribosomal RNA large subunit methyltransferase E (211 aa).

Residues Gly60, Trp62, Asp80, Asp96, and Asp121 each coordinate S-adenosyl-L-methionine. Residue Lys161 is the Proton acceptor of the active site.

Belongs to the class I-like SAM-binding methyltransferase superfamily. RNA methyltransferase RlmE family.

The protein localises to the cytoplasm. The catalysed reaction is uridine(2552) in 23S rRNA + S-adenosyl-L-methionine = 2'-O-methyluridine(2552) in 23S rRNA + S-adenosyl-L-homocysteine + H(+). Specifically methylates the uridine in position 2552 of 23S rRNA at the 2'-O position of the ribose in the fully assembled 50S ribosomal subunit. This is Ribosomal RNA large subunit methyltransferase E from Cellvibrio japonicus (strain Ueda107) (Pseudomonas fluorescens subsp. cellulosa).